The sequence spans 247 residues: Probable transcriptional regulatory protein lpp1249 (247 aa).

It belongs to the TACO1 family.

The protein localises to the cytoplasm. This chain is Probable transcriptional regulatory protein lpp1249, found in Legionella pneumophila (strain Paris).